The following is a 246-amino-acid chain: MSQKIALVTGAMGGLGTAICQALAKDGCIVAANCLPNFEPAAAWLGQQEALGFKFYVAEGDVSDFESCKAMVAKIEADLGPVDILVNNAGITRDKFFAKMDKAQWDAVIATNLSSLFNVTQQVSPKMAERGWGRIINISSVNGVKGQAGQTNYSAAKAGVIGFTKALAAELATKGVTVNAIAPGYIGTDMVMAIREDIRQAITDSVPMKRLGRPDEIGGAVSYLASEIAGYVTGSTLNINGGLNYQ.

8 to 32 (VTGAMGGLGTAICQALAKDGCIVAA) contributes to the NAD(+) binding site. Ser140 is a binding site for substrate. Tyr153 functions as the Proton acceptor in the catalytic mechanism.

The protein belongs to the short-chain dehydrogenases/reductases (SDR) family.

In terms of biological role, proposed to modify Nod factor fatty acyl chain. This is Nodulation protein G (nodG) from Azospirillum brasilense.